An 807-amino-acid polypeptide reads, in one-letter code: Sucrose synthase 1 (807 aa).

The GT-B glycosyltransferase stretch occupies residues 272-748 (MMFNVVILSP…GLKRIYEKYT (477 aa)).

Belongs to the glycosyltransferase 1 family. Plant sucrose synthase subfamily. As to quaternary structure, forms homotetramers. In endosperm it forms both homotetramers and heterotetramers with SS2, all three possible heterotetramers are formed. In terms of tissue distribution, highly expressed in developing endosperm and in roots and, at lower levels, in coleoptiles and aleurone. In 3 day old roots it is detected in cap cells and along the vascular strand, starting just after the meristemic region. In 9 day old leaves it is found in the phloem. In seeds it is distributed throughout the endosperm and also found in the assimilate-unloading tissues, the nucellar projection, the vascular area and at a high concentration in the chalazal region.

The enzyme catalyses an NDP-alpha-D-glucose + D-fructose = a ribonucleoside 5'-diphosphate + sucrose + H(+). Sucrose-cleaving enzyme that provides UDP-glucose and fructose for various metabolic pathways. This is Sucrose synthase 1 (SS1) from Hordeum vulgare (Barley).